The chain runs to 202 residues: Protein GrpE 1 (202 aa).

The protein belongs to the GrpE family. As to quaternary structure, homodimer.

Its subcellular location is the cytoplasm. Functionally, participates actively in the response to hyperosmotic and heat shock by preventing the aggregation of stress-denatured proteins, in association with DnaK and GrpE. It is the nucleotide exchange factor for DnaK and may function as a thermosensor. Unfolded proteins bind initially to DnaJ; upon interaction with the DnaJ-bound protein, DnaK hydrolyzes its bound ATP, resulting in the formation of a stable complex. GrpE releases ADP from DnaK; ATP binding to DnaK triggers the release of the substrate protein, thus completing the reaction cycle. Several rounds of ATP-dependent interactions between DnaJ, DnaK and GrpE are required for fully efficient folding. The protein is Protein GrpE 1 of Buchnera aphidicola subsp. Schizaphis graminum (strain Sg).